A 456-amino-acid polypeptide reads, in one-letter code: Anthocyanidin 3-O-glucosyltransferase UFGT (456 aa).

Serine 18 contacts kaempferol. Residue serine 18 coordinates quercetin. Threonine 19 contributes to the UDP binding site. Threonine 19 serves as a coordination point for UDP-alpha-D-glucose. Kaempferol is bound by residues histidine 20 and glutamine 84. Histidine 20 serves as the catalytic Proton acceptor. Position 84 (glutamine 84) interacts with quercetin. Aspartate 119 functions as the Charge relay in the catalytic mechanism. Residue threonine 141 participates in UDP-alpha-D-glucose binding. Positions 150 and 188 each coordinate kaempferol. Residues histidine 150 and glutamine 188 each contribute to the quercetin site. Positions 280, 306, 332, 333, and 350 each coordinate UDP. UDP-alpha-D-glucose-binding residues include threonine 280, serine 306, tryptophan 332, alanine 333, histidine 350, tryptophan 353, asparagine 354, serine 355, and glutamate 358. Asparagine 354, serine 355, and glutamate 358 together coordinate UDP. Quercetin is bound at residue glycine 373. Residues aspartate 374 and glutamine 375 each coordinate UDP-alpha-D-glucose.

It belongs to the UDP-glycosyltransferase family. Detected only in berry skin.

It carries out the reaction an anthocyanidin + UDP-alpha-D-glucose + H(+) = an anthocyanidin 3-O-beta-D-glucoside + UDP. It catalyses the reaction cyanidin + UDP-alpha-D-glucose = cyanidin 3-O-beta-D-glucoside + UDP + H(+). The catalysed reaction is delphinidin + UDP-alpha-D-glucose = delphinidin 3-O-beta-D-glucoside + UDP. The enzyme catalyses peonidin + UDP-alpha-D-glucose = peonidin 3-O-beta-D-glucoside + UDP. It carries out the reaction pelargonidin + UDP-alpha-D-glucose = pelargonidin 3-O-beta-D-glucoside + UDP. It catalyses the reaction malvidin + UDP-alpha-D-glucose = malvidin 3-O-beta-D-glucoside + UDP. The catalysed reaction is a flavonol + UDP-alpha-D-glucose = a flavonol 3-O-beta-D-glucoside + UDP + H(+). Its pathway is pigment biosynthesis; anthocyanin biosynthesis. Inhibited by Mn(2+) and Zn(2+). In the presence of other necessary color factors, this glycosylation reaction allows the accumulation of anthocyanin pigments. Involved in the formation of red wine pigments. UDP-glucose (UDP-Glc) is the physiological sugar donor, and cyanidin is the natural acceptor in vivo. Can glucosylate the anthocyanidins delphinidin, peonidin, pelargonidin and malvidin. The flavonols quercitin and kaempferol can also be glucosylated in vitro, but with glucosylation rates 50-100 times lower than cyanidin. In vitro, can use UDP-Glc, UDP-5SGlc, UDP-Xyl, UDP-Man, UDP-Gal, UDP-GlcNAc, GDP-Glc, dTDP-Glc and dTDP-Xyl as sugar donors, but not UDP-6OMeGal, UDP-Ara, UDP-6FGal, UDP-GlcN, UDP-2FGal, UDP-5SAra, GDP-Man, GDP-Fuc, UDP-Fuc or UDP-Rha. This chain is Anthocyanidin 3-O-glucosyltransferase UFGT, found in Vitis vinifera (Grape).